Consider the following 395-residue polypeptide: uncharacterized protein (395 aa).

Disordered regions lie at residues 185–282 (RREV…SSTA) and 316–372 (GSST…TCSS). Residues 248 to 257 (LHLRTRHPHR) are compositionally biased toward basic residues. A compositionally biased stretch (low complexity) spans 342-360 (ARASTHSRSSPSASANSRY).

This is an uncharacterized protein from Streptomyces fradiae (Streptomyces roseoflavus).